The primary structure comprises 158 residues: Small ribosomal subunit protein uS13 (158 aa).

Belongs to the universal ribosomal protein uS13 family. In terms of assembly, part of the 30S ribosomal subunit. Forms a loose heterodimer with protein S19. Forms two bridges to the 50S subunit in the 70S ribosome.

Its function is as follows. Located at the top of the head of the 30S subunit, it contacts several helices of the 16S rRNA. In the 70S ribosome it contacts the 23S rRNA (bridge B1a) and protein L5 of the 50S subunit (bridge B1b), connecting the 2 subunits; these bridges are implicated in subunit movement. In Picrophilus torridus (strain ATCC 700027 / DSM 9790 / JCM 10055 / NBRC 100828 / KAW 2/3), this protein is Small ribosomal subunit protein uS13.